A 901-amino-acid chain; its full sequence is MTAKAKDCPSLWGFGTTKTFKIPIEHLDFKYIENCSDVKHLEKILYVLRSGEEGYYPELTEFCEKCLTNLAPKSRALRKDKPAETASSFSAEEWEKIDSDLKSWVSEIKREENTCHFHDPENHPGVEDPLPPVRGSTCCPHSGKETYSKSKTAKKRIPRDYAEWDKFDVEKECSKIDEDYKEKTVINNKAHLSKIETKIETAGLTEKEKSFLANREKGKGNEAFYSGDYEEAVMYYTRSLSALPTAIAYNNRAQAEIKLQRWSSALEDCEKALELDPGNVKALLRRATTYKHQNKLQEAVDDLRKVLQVEPDNDLAKKTLSEVERDLKNSEPVSELQTKGKRMVIEEVENSGDEGGKGSADEREDGGSDEAAMGNIQKKLMVRRSEGGRRSRRGRTPGPRAEQQGGLRETATASTGDSHYPEEPRAADNPSGLKRRGNELFRGGQFAEAAAQYSVAIAQLEPTGSANADELSILYSNRAACYLKEGNCRDCIQDCNRALELHPFSVKPLLRRAMAYETLEQYRNAYVDYKTVLQIDCGIQLASDSANRIARILTELDGSKWRERLPPIPAVPTSEPLRVWLPAAETPDQDPCPNNCMPSITDEKMFQALKEEGNQLVKDKNYKDAISKYNECLKINSKACAIYTNRALCYLKLGQFEEAKLDCEQALQIDGENVKASHRLALAQKGLENCRESGVDPSQVLLSPDSSEAARHLDTKNDTAPPSKGRERRRIQVQEVDGSSDEEPERPAEASATSAPARDGVEDGGSAEPAEKLDVSKPTNAYEFGQVLSTISARKDEEACAHLLAITAPKDLPLLLSNKLEGDTFLLLIQSLKSHLVAKDPSLVYEHLLYLSKAERFKTMLTLINKGQKEQMAQLFDGLSDTQSDGLTAEDVQALRRQYEL.

3 TPR repeats span residues 213–246 (ANRE…LPTA), 247–279 (IAYN…DPGN), and 280–313 (VKAL…EPDN). The tract at residues 322–437 (EVERDLKNSE…DNPSGLKRRG (116 aa)) is disordered. A phosphoserine mark is found at Ser351 and Ser359. TPR repeat units follow at residues 430 to 464 (PSGL…EPTG), 472 to 505 (SILY…HPFS), 507 to 539 (KPLL…DCGI), 606 to 639 (FQAL…NSKA), and 640 to 673 (CAIY…DGEN). Residues 694 to 776 (GVDPSQVLLS…AEPAEKLDVS (83 aa)) form a disordered region. Ser703 carries the post-translational modification Phosphoserine. Positions 708–717 (EAARHLDTKN) are enriched in basic and acidic residues. Phosphoserine is present on residues Ser739 and Ser740. Position 756–763 (756–763 (PARDGVED)) interacts with GTP. Phosphoserine is present on Ser766.

In terms of tissue distribution, detected in cerebellum, tongue, esophagus, forestomach, sperm and testis.

It is found in the cytoplasm. The protein resides in the dynein axonemal particle. Functionally, may play a role in the cytoplasmic assembly of the ciliary dynein arms. May play a role in fertilization. Binds GTP and has GTPase activity. The chain is Sperm-associated antigen 1 (Spag1) from Mus musculus (Mouse).